The following is a 482-amino-acid chain: Glutamyl-tRNA(Gln) amidotransferase subunit A (482 aa).

Active-site charge relay system residues include Lys-81 and Ser-156. Ser-180 (acyl-ester intermediate) is an active-site residue.

The protein belongs to the amidase family. GatA subfamily. As to quaternary structure, heterotrimer of A, B and C subunits.

The enzyme catalyses L-glutamyl-tRNA(Gln) + L-glutamine + ATP + H2O = L-glutaminyl-tRNA(Gln) + L-glutamate + ADP + phosphate + H(+). Functionally, allows the formation of correctly charged Gln-tRNA(Gln) through the transamidation of misacylated Glu-tRNA(Gln) in organisms which lack glutaminyl-tRNA synthetase. The reaction takes place in the presence of glutamine and ATP through an activated gamma-phospho-Glu-tRNA(Gln). The chain is Glutamyl-tRNA(Gln) amidotransferase subunit A from Brachyspira hyodysenteriae (strain ATCC 49526 / WA1).